The sequence spans 119 residues: Ribonuclease P protein component (119 aa).

It belongs to the RnpA family. As to quaternary structure, consists of a catalytic RNA component (M1 or rnpB) and a protein subunit.

It carries out the reaction Endonucleolytic cleavage of RNA, removing 5'-extranucleotides from tRNA precursor.. Functionally, RNaseP catalyzes the removal of the 5'-leader sequence from pre-tRNA to produce the mature 5'-terminus. It can also cleave other RNA substrates such as 4.5S RNA. The protein component plays an auxiliary but essential role in vivo by binding to the 5'-leader sequence and broadening the substrate specificity of the ribozyme. The protein is Ribonuclease P protein component of Edwardsiella ictaluri (strain 93-146).